A 300-amino-acid polypeptide reads, in one-letter code: Glucose and ribitol dehydrogenase homolog (300 aa).

Positions 1 to 14 are enriched in polar residues; it reads MASQQFPPQNQETQ. Residues 1 to 23 are disordered; sequence MASQQFPPQNQETQPGKEHAMDP. 44 to 68 is an NAD(+) binding site; the sequence is IVTGGDSGIGRAVCLCFALEGATVA. Serine 192 contributes to the substrate binding site. The Proton acceptor role is filled by tyrosine 205.

Belongs to the short-chain dehydrogenases/reductases (SDR) family.

In terms of biological role, may act as a short alcohol-polyol-sugar dehydrogenase possibly related to carbohydrate metabolism and the acquisition of desiccation tolerance. May also be involved in signal transduction. In Oryza sativa subsp. japonica (Rice), this protein is Glucose and ribitol dehydrogenase homolog.